Consider the following 279-residue polypeptide: 2-dehydro-3-deoxyphosphooctonate aldolase (279 aa).

The protein belongs to the KdsA family.

Its subcellular location is the cytoplasm. It catalyses the reaction D-arabinose 5-phosphate + phosphoenolpyruvate + H2O = 3-deoxy-alpha-D-manno-2-octulosonate-8-phosphate + phosphate. The protein operates within carbohydrate biosynthesis; 3-deoxy-D-manno-octulosonate biosynthesis; 3-deoxy-D-manno-octulosonate from D-ribulose 5-phosphate: step 2/3. It participates in bacterial outer membrane biogenesis; lipopolysaccharide biosynthesis. The sequence is that of 2-dehydro-3-deoxyphosphooctonate aldolase from Aromatoleum aromaticum (strain DSM 19018 / LMG 30748 / EbN1) (Azoarcus sp. (strain EbN1)).